A 261-amino-acid polypeptide reads, in one-letter code: Hydroxyethylthiazole kinase (261 aa).

A substrate-binding site is contributed by M40. ATP-binding residues include K116 and T162. G189 contributes to the substrate binding site.

It belongs to the Thz kinase family. It depends on Mg(2+) as a cofactor.

It carries out the reaction 5-(2-hydroxyethyl)-4-methylthiazole + ATP = 4-methyl-5-(2-phosphooxyethyl)-thiazole + ADP + H(+). It participates in cofactor biosynthesis; thiamine diphosphate biosynthesis; 4-methyl-5-(2-phosphoethyl)-thiazole from 5-(2-hydroxyethyl)-4-methylthiazole: step 1/1. Functionally, catalyzes the phosphorylation of the hydroxyl group of 4-methyl-5-beta-hydroxyethylthiazole (THZ). This Methanosarcina acetivorans (strain ATCC 35395 / DSM 2834 / JCM 12185 / C2A) protein is Hydroxyethylthiazole kinase.